The following is a 328-amino-acid chain: Phosphate acetyltransferase (328 aa).

This sequence belongs to the phosphate acetyltransferase and butyryltransferase family.

It localises to the cytoplasm. The enzyme catalyses acetyl-CoA + phosphate = acetyl phosphate + CoA. Its pathway is metabolic intermediate biosynthesis; acetyl-CoA biosynthesis; acetyl-CoA from acetate: step 2/2. This chain is Phosphate acetyltransferase (pta), found in Staphylococcus aureus (strain COL).